We begin with the raw amino-acid sequence, 181 residues long: Cytochrome P450 monooxygenase dtpC (181 aa).

Cysteine 125 lines the heme pocket.

It belongs to the cytochrome P450 family. Requires heme as cofactor.

It functions in the pathway alkaloid biosynthesis. It participates in secondary metabolite biosynthesis. Its function is as follows. Cytochrome P450 monooxygenase; part of the gene cluster that mediates the biosynthesis of the dimeric diketopiperazine alkaloid ditryptophenaline. The nonribosomal peptide synthase dtpA accepts L-tryptophan and L-phenylalanine as its substrates and forms the phenylalanyl-tryptophanyl cyclic dipeptide product cyclophenylalanyltryptophenyl. The N-methyltransferase dtpB is responsible for the N-methylation of cyclophenylalanyltryptophenyl to yield cyclo-N-methylphenylalanyltryptophenyl. The cytochrome P450 monooxygenase is responsible not only for pyrroloindole ring formation but also for concurrent dimerization of N-methylphenylalanyltryptophanyl diketopiperazine monomers into a homodimeric product. In Aspergillus flavus (strain ATCC 200026 / FGSC A1120 / IAM 13836 / NRRL 3357 / JCM 12722 / SRRC 167), this protein is Cytochrome P450 monooxygenase dtpC.